We begin with the raw amino-acid sequence, 253 residues long: Ubiquinone/menaquinone biosynthesis C-methyltransferase UbiE (253 aa).

S-adenosyl-L-methionine contacts are provided by residues T76, D97, 125–126 (NA), and S142.

It belongs to the class I-like SAM-binding methyltransferase superfamily. MenG/UbiE family.

The catalysed reaction is a 2-demethylmenaquinol + S-adenosyl-L-methionine = a menaquinol + S-adenosyl-L-homocysteine + H(+). It catalyses the reaction a 2-methoxy-6-(all-trans-polyprenyl)benzene-1,4-diol + S-adenosyl-L-methionine = a 5-methoxy-2-methyl-3-(all-trans-polyprenyl)benzene-1,4-diol + S-adenosyl-L-homocysteine + H(+). It functions in the pathway quinol/quinone metabolism; menaquinone biosynthesis; menaquinol from 1,4-dihydroxy-2-naphthoate: step 2/2. It participates in cofactor biosynthesis; ubiquinone biosynthesis. Methyltransferase required for the conversion of demethylmenaquinol (DMKH2) to menaquinol (MKH2) and the conversion of 2-polyprenyl-6-methoxy-1,4-benzoquinol (DDMQH2) to 2-polyprenyl-3-methyl-6-methoxy-1,4-benzoquinol (DMQH2). The chain is Ubiquinone/menaquinone biosynthesis C-methyltransferase UbiE from Xylella fastidiosa (strain M23).